Consider the following 116-residue polypeptide: MAKDKSRSKEQVTREYTIHLSKRLHKTSFKKCAPKAVKEIRKFASKVMGTSDVRLDVKLNKAVWSKGIKNVPTRLRIVISRRRNDDEDAKEEMYSFVTVAEDQSTKGKGTVVVQDA.

This sequence belongs to the eukaryotic ribosomal protein eL31 family.

The sequence is that of Large ribosomal subunit protein eL31 (RPL31) from Chlamydomonas reinhardtii (Chlamydomonas smithii).